The following is a 227-amino-acid chain: Ribonuclease 3 (227 aa).

In terms of domain architecture, RNase III spans 6–128 (ASDYQQRIGY…VIAAIYLDAD (123 aa)). E41 is a binding site for Mg(2+). D45 is a catalytic residue. Positions 114 and 117 each coordinate Mg(2+). The active site involves E117. The DRBM domain occupies 155-225 (DPKTRLQEWL…ASHAIDQLDS (71 aa)). Basic and acidic residues predominate over residues 203–212 (GEGSSRRLAE). The tract at residues 203–227 (GEGSSRRLAEQDAASHAIDQLDSNK) is disordered.

The protein belongs to the ribonuclease III family. As to quaternary structure, homodimer. Requires Mg(2+) as cofactor.

The protein localises to the cytoplasm. It catalyses the reaction Endonucleolytic cleavage to 5'-phosphomonoester.. Its function is as follows. Digests double-stranded RNA. Involved in the processing of primary rRNA transcript to yield the immediate precursors to the large and small rRNAs (23S and 16S). Processes some mRNAs, and tRNAs when they are encoded in the rRNA operon. Processes pre-crRNA and tracrRNA of type II CRISPR loci if present in the organism. The protein is Ribonuclease 3 of Xylella fastidiosa (strain M23).